Reading from the N-terminus, the 98-residue chain is Large ribosomal subunit protein uL23 (98 aa).

Belongs to the universal ribosomal protein uL23 family. As to quaternary structure, part of the 50S ribosomal subunit. Contacts protein L29, and trigger factor when it is bound to the ribosome.

Its function is as follows. One of the early assembly proteins it binds 23S rRNA. One of the proteins that surrounds the polypeptide exit tunnel on the outside of the ribosome. Forms the main docking site for trigger factor binding to the ribosome. The polypeptide is Large ribosomal subunit protein uL23 (Koribacter versatilis (strain Ellin345)).